The sequence spans 427 residues: 3-isopropylmalate dehydratase large subunit (427 aa).

3 residues coordinate [4Fe-4S] cluster: Cys-308, Cys-368, and Cys-371.

Belongs to the aconitase/IPM isomerase family. LeuC type 2 subfamily. As to quaternary structure, heterodimer of LeuC and LeuD. [4Fe-4S] cluster serves as cofactor.

The catalysed reaction is (2R,3S)-3-isopropylmalate = (2S)-2-isopropylmalate. It functions in the pathway amino-acid biosynthesis; L-leucine biosynthesis; L-leucine from 3-methyl-2-oxobutanoate: step 2/4. Its function is as follows. Catalyzes the isomerization between 2-isopropylmalate and 3-isopropylmalate, via the formation of 2-isopropylmaleate. This chain is 3-isopropylmalate dehydratase large subunit, found in Geobacter metallireducens (strain ATCC 53774 / DSM 7210 / GS-15).